The chain runs to 793 residues: Protein translocase subunit SecA 2 (793 aa).

ATP-binding positions include glutamine 77, 95–99, and aspartate 493; that span reads GEGKT.

Belongs to the SecA family. In terms of assembly, monomer and homodimer (Potential). Part of the accessory SecA2/SecY2 protein translocation apparatus required to export cell wall protein GspB.

It localises to the cell membrane. It is found in the cytoplasm. The enzyme catalyses ATP + H2O + cellular proteinSide 1 = ADP + phosphate + cellular proteinSide 2.. Functionally, part of the accessory SecA2/SecY2 system specifically required to export GspB, a serine-rich repeat cell wall protein encoded upstream in the same operon. This Streptococcus gordonii protein is Protein translocase subunit SecA 2.